Here is a 210-residue protein sequence, read N- to C-terminus: Molybdenum cofactor guanylyltransferase (210 aa).

GTP contacts are provided by residues 14–16 (LAG), lysine 27, asparagine 55, aspartate 73, and aspartate 108. Aspartate 108 is a Mg(2+) binding site.

The protein belongs to the MobA family. Monomer. The cofactor is Mg(2+).

Its subcellular location is the cytoplasm. The catalysed reaction is Mo-molybdopterin + GTP + H(+) = Mo-molybdopterin guanine dinucleotide + diphosphate. Functionally, transfers a GMP moiety from GTP to Mo-molybdopterin (Mo-MPT) cofactor (Moco or molybdenum cofactor) to form Mo-molybdopterin guanine dinucleotide (Mo-MGD) cofactor. In Rhodopseudomonas palustris (strain BisB5), this protein is Molybdenum cofactor guanylyltransferase.